A 367-amino-acid chain; its full sequence is Cyclin-D5-1 (367 aa).

A disordered region spans residues 307-333 (QPTSPASKSTTTTTGKRSSSSSCSEST).

It belongs to the cyclin family. Cyclin D subfamily.

The sequence is that of Cyclin-D5-1 (CYCD5-1) from Oryza sativa subsp. japonica (Rice).